Reading from the N-terminus, the 208-residue chain is Octanoyltransferase (208 aa).

Positions 30 to 208 (GTASEAVFIL…ILKQEFYKIF (179 aa)) constitute a BPL/LPL catalytic domain. Substrate-binding positions include 69-76 (RGGKFTYH), 142-144 (SIG), and 155-157 (GVA). The active-site Acyl-thioester intermediate is C173.

This sequence belongs to the LipB family.

The protein resides in the cytoplasm. It catalyses the reaction octanoyl-[ACP] + L-lysyl-[protein] = N(6)-octanoyl-L-lysyl-[protein] + holo-[ACP] + H(+). Its pathway is protein modification; protein lipoylation via endogenous pathway; protein N(6)-(lipoyl)lysine from octanoyl-[acyl-carrier-protein]: step 1/2. Functionally, catalyzes the transfer of endogenously produced octanoic acid from octanoyl-acyl-carrier-protein onto the lipoyl domains of lipoate-dependent enzymes. Lipoyl-ACP can also act as a substrate although octanoyl-ACP is likely to be the physiological substrate. This is Octanoyltransferase from Orientia tsutsugamushi (strain Boryong) (Rickettsia tsutsugamushi).